The chain runs to 440 residues: MARFFQPKKHSTLDTKHQPVTIERLDHQGSGLAFLHKKPLFVDGALPGEEVLIQLTENKSKYARGQLIKVLKPSAERVAPFCAHYAQCGGCDLQHLDRAGQIHHKQQALSQLMVKFAGQSLALSAPVCSDDQGYRRRARLSLMWDKKTQQLQLGFRRKQSKAIVNVTHCPVLEPSLNALLPDLNALLSEWSQPERLGHVELVKGDNTRVLVLRHLGALIEQDQQRLTDFASQNQLTLYLMLEAGELQHVQGEAPYCEETGSRLSFLPSHFIQVNRAVNQHMVVQALNWLEVSPQERVLDLFCGLGNFTLPLAKQAQAVVGVEGVDEMVQHATHNAKLNQINNVAFYQANLEQDMTSASWAQQKFAKVLLDPARAGAEGIVDQLSALGAKRVVYVSCNPATLARDSQSLLSQGFRLEKLGMLDMFPHTSHLESMALFVKKG.

The 59-residue stretch at 11–69 (STLDTKHQPVTIERLDHQGSGLAFLHKKPLFVDGALPGEEVLIQLTENKSKYARGQLIK) folds into the TRAM domain. Residues Cys82, Cys88, Cys91, and Cys169 each contribute to the [4Fe-4S] cluster site. Positions 272, 301, 306, 322, 349, and 370 each coordinate S-adenosyl-L-methionine. Cys396 acts as the Nucleophile in catalysis.

It belongs to the class I-like SAM-binding methyltransferase superfamily. RNA M5U methyltransferase family. RlmD subfamily.

It carries out the reaction uridine(1939) in 23S rRNA + S-adenosyl-L-methionine = 5-methyluridine(1939) in 23S rRNA + S-adenosyl-L-homocysteine + H(+). Catalyzes the formation of 5-methyl-uridine at position 1939 (m5U1939) in 23S rRNA. In Vibrio cholerae serotype O1 (strain M66-2), this protein is 23S rRNA (uracil(1939)-C(5))-methyltransferase RlmD.